The following is a 136-amino-acid chain: Large ribosomal subunit protein uL16 (136 aa).

It belongs to the universal ribosomal protein uL16 family. In terms of assembly, part of the 50S ribosomal subunit.

Binds 23S rRNA and is also seen to make contacts with the A and possibly P site tRNAs. The sequence is that of Large ribosomal subunit protein uL16 from Aliivibrio fischeri (strain ATCC 700601 / ES114) (Vibrio fischeri).